A 205-amino-acid chain; its full sequence is Glycerol-3-phosphate acyltransferase (205 aa).

The Periplasmic portion of the chain corresponds to 1-3; that stretch reads MSA. A helical transmembrane segment spans residues 4 to 24; the sequence is IAPGMILIAYLCGSISSAILV. Topologically, residues 25 to 52 are cytoplasmic; sequence CRLCGLPDPRTSGSGNPGATNVLRIGGK. A helical transmembrane segment spans residues 53–73; sequence GAAVAVLIFDVLKGMLPVWGA. Residues 74 to 80 lie on the Periplasmic side of the membrane; the sequence is YELGVSP. A helical transmembrane segment spans residues 81 to 101; that stretch reads FWLGLIAIAACLGHIWPVFFG. Topologically, residues 102–111 are cytoplasmic; it reads FKGGKGVATA. A helical membrane pass occupies residues 112 to 132; the sequence is FGAIAPISWDLTGVMAGTWLL. Topologically, residues 133–137 are periplasmic; sequence TVLLS. A helical transmembrane segment spans residues 138–158; that stretch reads GYSSLGAIVSALIAPFYVWWF. Residues 159–205 are Cytoplasmic-facing; that stretch reads KPQFTFPVSMLSCLILLRHHDNIQRLWRRQETKIWTKFKRKREKDPE.

Belongs to the PlsY family. Probably interacts with PlsX.

Its subcellular location is the cell inner membrane. The enzyme catalyses sn-glycerol 3-phosphate + an acyl-CoA = a 1-acyl-sn-glycero-3-phosphate + CoA. The catalysed reaction is a fatty acyl-[ACP] + sn-glycerol 3-phosphate = a 1-acyl-sn-glycero-3-phosphate + holo-[ACP]. It functions in the pathway lipid metabolism; phospholipid metabolism. Catalyzes the transfer of an acyl group from acyl-ACP to glycerol-3-phosphate (G3P) to form lysophosphatidic acid (LPA). This enzyme can also utilize acyl-CoA as fatty acyl donor, but not acyl-PO(4). The polypeptide is Glycerol-3-phosphate acyltransferase (Shigella flexneri serotype 5b (strain 8401)).